Reading from the N-terminus, the 164-residue chain is Transcriptional repressor NrdR (164 aa).

A zinc finger lies at 3 to 34 (CPKCNYNKSSVVDSRQAEDGNTIRRRRECEKC). The region spanning 49–139 (LLVVKKDGTR…VYKSFKDVDE (91 aa)) is the ATP-cone domain.

The protein belongs to the NrdR family. Zn(2+) is required as a cofactor.

In terms of biological role, negatively regulates transcription of bacterial ribonucleotide reductase nrd genes and operons by binding to NrdR-boxes. The chain is Transcriptional repressor NrdR from Streptococcus uberis (strain ATCC BAA-854 / 0140J).